The chain runs to 256 residues: Indole-3-glycerol phosphate synthase (256 aa).

It belongs to the TrpC family.

The enzyme catalyses 1-(2-carboxyphenylamino)-1-deoxy-D-ribulose 5-phosphate + H(+) = (1S,2R)-1-C-(indol-3-yl)glycerol 3-phosphate + CO2 + H2O. It functions in the pathway amino-acid biosynthesis; L-tryptophan biosynthesis; L-tryptophan from chorismate: step 4/5. In Caldanaerobacter subterraneus subsp. tengcongensis (strain DSM 15242 / JCM 11007 / NBRC 100824 / MB4) (Thermoanaerobacter tengcongensis), this protein is Indole-3-glycerol phosphate synthase.